The chain runs to 234 residues: Orotidine 5'-phosphate decarboxylase (234 aa).

Substrate contacts are provided by residues D11, K33, 60 to 69, T120, R181, Q190, G210, and R211; that span reads DLKFHDIPNT. The active-site Proton donor is K62.

It belongs to the OMP decarboxylase family. Type 1 subfamily. As to quaternary structure, homodimer.

It catalyses the reaction orotidine 5'-phosphate + H(+) = UMP + CO2. It participates in pyrimidine metabolism; UMP biosynthesis via de novo pathway; UMP from orotate: step 2/2. Functionally, catalyzes the decarboxylation of orotidine 5'-monophosphate (OMP) to uridine 5'-monophosphate (UMP). In Aliivibrio fischeri (strain ATCC 700601 / ES114) (Vibrio fischeri), this protein is Orotidine 5'-phosphate decarboxylase.